Here is a 304-residue protein sequence, read N- to C-terminus: Quorum-quenching protein AidA (304 aa).

It belongs to the AB hydrolase superfamily.

Involved in quorum quenching (QQ). Inhibits motility and biofilm formation. Could contribute in bacterial competition, as it is capable of hydrolyzing the signaling molecules that mediate interspecies communication. This is Quorum-quenching protein AidA from Acinetobacter baumannii (strain MDR-ZJ06).